The following is a 416-amino-acid chain: Dihydroorotase (416 aa).

Zn(2+)-binding residues include His53 and His55. Substrate-binding positions include 55-57 (HLR) and Asn87. Zn(2+) contacts are provided by Asp145, His172, His225, and Asp298. Residue Asp298 is part of the active site. His302 provides a ligand contact to substrate.

It belongs to the metallo-dependent hydrolases superfamily. DHOase family. Class I DHOase subfamily. Zn(2+) serves as cofactor.

The enzyme catalyses (S)-dihydroorotate + H2O = N-carbamoyl-L-aspartate + H(+). The protein operates within pyrimidine metabolism; UMP biosynthesis via de novo pathway; (S)-dihydroorotate from bicarbonate: step 3/3. Catalyzes the reversible cyclization of carbamoyl aspartate to dihydroorotate. This chain is Dihydroorotase, found in Deinococcus radiodurans (strain ATCC 13939 / DSM 20539 / JCM 16871 / CCUG 27074 / LMG 4051 / NBRC 15346 / NCIMB 9279 / VKM B-1422 / R1).